The sequence spans 244 residues: uncharacterized protein (244 aa).

One can recognise an FCP1 homology domain in the interval 19–196; the sequence is ATDNRKLVIL…ACVIRYLKHL (178 aa).

This is an uncharacterized protein from Schizosaccharomyces pombe (strain 972 / ATCC 24843) (Fission yeast).